Here is a 311-residue protein sequence, read N- to C-terminus: Probable dihydroorotate dehydrogenase A (fumarate) (311 aa).

Residues Lys-45, 69 to 73 (NSMGL), and Asn-128 contribute to the substrate site. Residue 45–46 (KT) coordinates FMN. FMN is bound at residue Asn-128. Catalysis depends on Cys-131, which acts as the Nucleophile. FMN contacts are provided by Lys-165 and Val-193. Residue 194 to 195 (NS) participates in substrate binding. Residues Gly-220, 248–249 (GG), and 270–271 (GT) each bind FMN.

This sequence belongs to the dihydroorotate dehydrogenase family. Type 1 subfamily. In terms of assembly, homodimer. It depends on FMN as a cofactor.

It localises to the cytoplasm. The catalysed reaction is (S)-dihydroorotate + fumarate = orotate + succinate. It participates in pyrimidine metabolism; UMP biosynthesis via de novo pathway. In terms of biological role, catalyzes the conversion of dihydroorotate to orotate with fumarate as the electron acceptor. The chain is Probable dihydroorotate dehydrogenase A (fumarate) (pyrDA) from Streptococcus pneumoniae (strain ATCC BAA-255 / R6).